Here is a 201-residue protein sequence, read N- to C-terminus: uncharacterized protein (201 aa).

This is an uncharacterized protein from Bacillus subtilis (strain 168).